The chain runs to 392 residues: NDP-glycosyltransferase YjiC (392 aa).

Residues Asn-18, Thr-229, Ser-255, Val-278, His-293, and Asn-297–Glu-301 contribute to the UDP site.

The protein belongs to the UDP-glycosyltransferase family. Monomer.

The enzyme catalyses an NDP-glycose + an acceptor = a glycosylated acceptor + NDP.. With respect to regulation, activity is improved in the presence of Mn(2+), Mg(2+) and Ca(2+), and inhibited by Ni(2+), Zn(2+) and Cu(2+). Glycosyltransferase that can glycosylate a wide range of substrates, including various flavonoids, phenyl ketones, curcuminoid, lignins, zingerone, triterpenes, stilbene and anthraquinone, using UDP-glucose or ADP-glucose as sugar donor. It also exhibits O-, N- and S-glycosylation activities towards simple aromatics. In vivo, the broad acceptor tolerance of YjiC might function as a detoxification agent against exogenous xenobiotics to make the strain adaptable to the changeable environment. In Bacillus subtilis (strain 168), this protein is NDP-glycosyltransferase YjiC (yjiC).